Consider the following 339-residue polypeptide: tRNA pseudouridine synthase D (339 aa).

The active-site Nucleophile is Asp-80. The TRUD domain maps to 155 to 311 (GFPNYFTEQR…AKGFSWAFEL (157 aa)).

The protein belongs to the pseudouridine synthase TruD family.

The catalysed reaction is uridine(13) in tRNA = pseudouridine(13) in tRNA. Its function is as follows. Responsible for synthesis of pseudouridine from uracil-13 in transfer RNAs. The polypeptide is tRNA pseudouridine synthase D (Haemophilus influenzae (strain PittEE)).